The sequence spans 202 residues: MSALETQALGMIPMVIEQSGRGERSYDIYSRLLKERVIFLVGEVNDQTANLVVAQLLFLESENPDKDISFYINSPGGSVTAGMAIYDTMQFIKPDVSTLCCGFAASMGAFLLAAGAKGKRYSLPNSKIMIHQVLGGARGQATDIEIHARDILRTKDQMNRILAERTGQPIEKVKADTERDYFMTADEAKDYGIVDQVIAKRP.

The Nucleophile role is filled by serine 106. Histidine 131 is an active-site residue.

Belongs to the peptidase S14 family. As to quaternary structure, fourteen ClpP subunits assemble into 2 heptameric rings which stack back to back to give a disk-like structure with a central cavity, resembling the structure of eukaryotic proteasomes.

The protein resides in the cytoplasm. The catalysed reaction is Hydrolysis of proteins to small peptides in the presence of ATP and magnesium. alpha-casein is the usual test substrate. In the absence of ATP, only oligopeptides shorter than five residues are hydrolyzed (such as succinyl-Leu-Tyr-|-NHMec, and Leu-Tyr-Leu-|-Tyr-Trp, in which cleavage of the -Tyr-|-Leu- and -Tyr-|-Trp bonds also occurs).. Functionally, cleaves peptides in various proteins in a process that requires ATP hydrolysis. Has a chymotrypsin-like activity. Plays a major role in the degradation of misfolded proteins. The chain is ATP-dependent Clp protease proteolytic subunit from Acidovorax ebreus (strain TPSY) (Diaphorobacter sp. (strain TPSY)).